Here is a 722-residue protein sequence, read N- to C-terminus: MQGQTTSVSFDGREIRLTTGRYAPQAGGSVLIECGDTAVLVTATQGQGREGADFLPLSCDYEERLYAAGRIPGSFMRREGRPPERATLISRLIDRPLRPLFPNWMRDDIQVVATCLSLDERVPADILAVTGSSMATLLAGIPFYGPMAAVRVGLLGDDFVLNPSFREIERGDLDLVVAGTPDGVVMVEAGSNQLTEQDVIEAIDFGYEAVNELIKAQESILKDSGLTQIKPEKPDLDETVPSYLEKNCTKPISALLKEFDLSKEDRDLKLDEIKTNCAEKIDSLKDDNAVKKSITTNTKLLGISFKALTKKLMREQIIKDGKRVDGRALDEVREISAEAGILPKRVHGSGLFQRGLTQVLSTATLGTPSDAQEMDDLNPSPDKTYIHHYNFPPYSVGETRPMRTPGRREVGHGALAERAIIPVLPPKESFPYVLRVVSEVLSSNGSTSMGSVCGSTIALLDAGVPLKAPVSGAAMGLIKEGEEVRILTDIQGIEDFLGDMDFKVAGTEKGITALQMDMKMTGLPIKIIGEAINQAKPARTHILEKMVQAIDKPRETLSPHAPRLLSFRIDPELIGTVIGPGGRTIKGITERTNTKIDIEDGGIVTIASHDGVAAEEAQKIIEGLTRKVHEGEVFTGSITRIIPIGAFVEILPGKEGMIHISQLSEARVEKVEDVVKVGDEVTVRVREIDNRGRINLTLRGIPQNGDMQYYPQPTPTPVAPLM.

Residues D495 and D501 each coordinate Mg(2+). In terms of domain architecture, KH spans 562–621; that stretch reads PRLLSFRIDPELIGTVIGPGGRTIKGITERTNTKIDIEDGGIVTIASHDGVAAEEAQKII. The S1 motif domain occupies 631-699; the sequence is GEVFTGSITR…NRGRINLTLR (69 aa).

It belongs to the polyribonucleotide nucleotidyltransferase family. Mg(2+) serves as cofactor.

Its subcellular location is the cytoplasm. The catalysed reaction is RNA(n+1) + phosphate = RNA(n) + a ribonucleoside 5'-diphosphate. Functionally, involved in mRNA degradation. Catalyzes the phosphorolysis of single-stranded polyribonucleotides processively in the 3'- to 5'-direction. The chain is Polyribonucleotide nucleotidyltransferase from Prochlorococcus marinus (strain SARG / CCMP1375 / SS120).